The following is a 385-amino-acid chain: tRNA-specific 2-thiouridylase MnmA (385 aa).

ATP contacts are provided by residues 27–34 and Leu-53; that span reads AMSGGVDS. Cys-121 functions as the Nucleophile in the catalytic mechanism. An intrachain disulfide couples Cys-121 to Cys-217. Gly-145 lines the ATP pocket. The segment at 167 to 169 is interaction with tRNA; that stretch reads KDQ. The active-site Cysteine persulfide intermediate is the Cys-217.

Belongs to the MnmA/TRMU family.

Its subcellular location is the cytoplasm. The enzyme catalyses S-sulfanyl-L-cysteinyl-[protein] + uridine(34) in tRNA + AH2 + ATP = 2-thiouridine(34) in tRNA + L-cysteinyl-[protein] + A + AMP + diphosphate + H(+). In terms of biological role, catalyzes the 2-thiolation of uridine at the wobble position (U34) of tRNA, leading to the formation of s(2)U34. The polypeptide is tRNA-specific 2-thiouridylase MnmA (Sorangium cellulosum (strain So ce56) (Polyangium cellulosum (strain So ce56))).